A 430-amino-acid chain; its full sequence is Methylthioribose kinase 1 (430 aa).

ATP-binding positions include 52–56, Lys-71, and 125–127; these read DGNLN and RYI. Asn-56 lines the substrate pocket. Asp-246 serves as a coordination point for substrate. Residue 263 to 265 participates in ATP binding; sequence DPE. Arg-373 provides a ligand contact to substrate.

Belongs to the methylthioribose kinase family. In terms of assembly, homodimer.

It catalyses the reaction 5-(methylsulfanyl)-D-ribose + ATP = 5-(methylsulfanyl)-alpha-D-ribose 1-phosphate + ADP + H(+). Its pathway is amino-acid biosynthesis; L-methionine biosynthesis via salvage pathway; S-methyl-5-thio-alpha-D-ribose 1-phosphate from S-methyl-5'-thioadenosine (hydrolase route): step 2/2. In terms of biological role, catalyzes the phosphorylation of methylthioribose into methylthioribose-1-phosphate. The chain is Methylthioribose kinase 1 from Oryza sativa subsp. japonica (Rice).